A 118-amino-acid chain; its full sequence is Large ribosomal subunit protein bL20 (118 aa).

This sequence belongs to the bacterial ribosomal protein bL20 family.

Functionally, binds directly to 23S ribosomal RNA and is necessary for the in vitro assembly process of the 50S ribosomal subunit. It is not involved in the protein synthesizing functions of that subunit. This chain is Large ribosomal subunit protein bL20, found in Sulfurovum sp. (strain NBC37-1).